Consider the following 96-residue polypeptide: UPF0235 protein SO_3356 (96 aa).

This sequence belongs to the UPF0235 family.

The chain is UPF0235 protein SO_3356 from Shewanella oneidensis (strain ATCC 700550 / JCM 31522 / CIP 106686 / LMG 19005 / NCIMB 14063 / MR-1).